A 161-amino-acid chain; its full sequence is uncharacterized protein (161 aa).

The helical transmembrane segment at 16-36 threads the bilayer; sequence KLGLVVAIFFFMMGTTVVVLY.

It localises to the membrane. This is an uncharacterized protein from Encephalitozoon cuniculi (strain GB-M1) (Microsporidian parasite).